The sequence spans 432 residues: Trigger factor (432 aa).

The 86-residue stretch at 161–246 folds into the PPIase FKBP-type domain; the sequence is GTRATINFVG…VVKVEARELP (86 aa).

The protein belongs to the FKBP-type PPIase family. Tig subfamily.

The protein localises to the cytoplasm. It catalyses the reaction [protein]-peptidylproline (omega=180) = [protein]-peptidylproline (omega=0). Functionally, involved in protein export. Acts as a chaperone by maintaining the newly synthesized protein in an open conformation. Functions as a peptidyl-prolyl cis-trans isomerase. The chain is Trigger factor from Aliivibrio salmonicida (strain LFI1238) (Vibrio salmonicida (strain LFI1238)).